Here is a 360-residue protein sequence, read N- to C-terminus: Histidinol-phosphate aminotransferase (360 aa).

The residue at position 222 (K222) is an N6-(pyridoxal phosphate)lysine.

This sequence belongs to the class-II pyridoxal-phosphate-dependent aminotransferase family. Histidinol-phosphate aminotransferase subfamily. In terms of assembly, homodimer. Pyridoxal 5'-phosphate serves as cofactor.

The enzyme catalyses L-histidinol phosphate + 2-oxoglutarate = 3-(imidazol-4-yl)-2-oxopropyl phosphate + L-glutamate. Its pathway is amino-acid biosynthesis; L-histidine biosynthesis; L-histidine from 5-phospho-alpha-D-ribose 1-diphosphate: step 7/9. The chain is Histidinol-phosphate aminotransferase from Listeria welshimeri serovar 6b (strain ATCC 35897 / DSM 20650 / CCUG 15529 / CIP 8149 / NCTC 11857 / SLCC 5334 / V8).